The following is a 133-amino-acid chain: Nucleoside diphosphate kinase (133 aa).

The ATP site is built by Lys-9, Phe-57, Arg-85, Thr-91, Arg-102, and Asn-112. Catalysis depends on His-115, which acts as the Pros-phosphohistidine intermediate.

The protein belongs to the NDK family. Homotetramer. Mg(2+) serves as cofactor.

Its subcellular location is the cytoplasm. The enzyme catalyses a 2'-deoxyribonucleoside 5'-diphosphate + ATP = a 2'-deoxyribonucleoside 5'-triphosphate + ADP. The catalysed reaction is a ribonucleoside 5'-diphosphate + ATP = a ribonucleoside 5'-triphosphate + ADP. Its function is as follows. Major role in the synthesis of nucleoside triphosphates other than ATP. The ATP gamma phosphate is transferred to the NDP beta phosphate via a ping-pong mechanism, using a phosphorylated active-site intermediate. This Rubrobacter xylanophilus (strain DSM 9941 / JCM 11954 / NBRC 16129 / PRD-1) protein is Nucleoside diphosphate kinase.